Consider the following 217-residue polypeptide: Probable GTP-binding protein EngB (217 aa).

Residues 29 to 213 (GPLEVAFAGR…RQAIAETVGI (185 aa)) form the EngB-type G domain. GTP contacts are provided by residues 37–44 (GRSNVGKS), 64–68 (GRTQE), 91–94 (DMPG), 158–161 (TKTD), and 192–194 (TSS). The Mg(2+) site is built by serine 44 and threonine 66.

The protein belongs to the TRAFAC class TrmE-Era-EngA-EngB-Septin-like GTPase superfamily. EngB GTPase family. Mg(2+) is required as a cofactor.

Functionally, necessary for normal cell division and for the maintenance of normal septation. This Rhizobium johnstonii (strain DSM 114642 / LMG 32736 / 3841) (Rhizobium leguminosarum bv. viciae) protein is Probable GTP-binding protein EngB.